Consider the following 323-residue polypeptide: Olfactory receptor 5P58 (323 aa).

Topologically, residues M1 to V28 are extracellular. N-linked (GlcNAc...) asparagine glycosylation occurs at N8. The helical transmembrane segment at I29–I49 threads the bilayer. At L50–Q57 the chain is on the cytoplasmic side. The helical transmembrane segment at L58–S78 threads the bilayer. Over S79–I102 the chain is Extracellular. An N-linked (GlcNAc...) asparagine glycan is attached at N92. C100 and C192 are joined by a disulfide. A helical membrane pass occupies residues Q103–Y123. Residues D124–S136 are Cytoplasmic-facing. The chain crosses the membrane as a helical span at residues I137 to L157. Over N158–V199 the chain is Extracellular. Residues A200–S220 traverse the membrane as a helical segment. At Y221–A240 the chain is on the cytoplasmic side. Residues F241 to I261 traverse the membrane as a helical segment. The Extracellular portion of the chain corresponds to Y262–N274. N268 carries N-linked (GlcNAc...) asparagine glycosylation. Residues K275–L295 traverse the membrane as a helical segment. Residues R296–S323 are Cytoplasmic-facing.

This sequence belongs to the G-protein coupled receptor 1 family.

It localises to the cell membrane. Potential odorant receptor. This chain is Olfactory receptor 5P58, found in Mus musculus (Mouse).